Reading from the N-terminus, the 579-residue chain is Probable N-acetylgalactosaminyltransferase 9 (579 aa).

Residues 1–12 are Cytoplasmic-facing; sequence MLRYIIPRKKGT. Residues 13-30 form a helical; Signal-anchor for type II membrane protein membrane-spanning segment; the sequence is FVIAAFLTVAFFCIVAYH. Topologically, residues 31–579 are lumenal; the sequence is RNDRRRTKFQ…KWNFIDPAKA (549 aa). Residue N67 is glycosylated (N-linked (GlcNAc...) asparagine). 5 cysteine pairs are disulfide-bonded: C123–C356, C347–C427, C464–C483, C507–C520, and C545–C562. A catalytic subdomain A region spans residues 133–243; sequence LPKTSVIIIF…HGWLEPIVQR (111 aa). 2 residues coordinate substrate: D174 and R204. Residue D227 participates in Mn(2+) binding. Residue S228 coordinates substrate. H229 is a Mn(2+) binding site. The interval 302–364 is catalytic subdomain B; that stretch reads YIRSPTMAGG…PCSHVGHIFR (63 aa). Position 333 (W333) interacts with substrate. Residue H361 participates in Mn(2+) binding. Substrate contacts are provided by R364, H367, and Y369. Residue N370 is glycosylated (N-linked (GlcNAc...) asparagine). The 125-residue stretch at 450 to 574 folds into the Ricin B-type lectin domain; it reads AYGALHTVVS…KDEHQKWNFI (125 aa).

Belongs to the glycosyltransferase 2 family. GalNAc-T subfamily. Mn(2+) serves as cofactor.

The protein localises to the golgi apparatus membrane. Its pathway is protein modification; protein glycosylation. Its function is as follows. Probable glycopeptide transferase involved in O-linked oligosaccharide biosynthesis. Glycopeptide transferases catalyze the transfer of an N-acetyl-D-galactosamine residue to an already glycosylated peptide. In contrast to other members of the family, it does not act as a peptide transferase that transfers GalNAc onto serine or threonine residue on peptides that have been tested. Some peptide transferase activity is however not excluded, considering that its appropriate peptide substrate may remain unidentified. The polypeptide is Probable N-acetylgalactosaminyltransferase 9 (gly-9) (Caenorhabditis elegans).